We begin with the raw amino-acid sequence, 252 residues long: Triosephosphate isomerase (252 aa).

10-12 (NWK) lines the substrate pocket. His-96 acts as the Electrophile in catalysis. The active-site Proton acceptor is the Glu-168. Substrate contacts are provided by residues Gly-174, Ser-214, and 235–236 (GG).

Belongs to the triosephosphate isomerase family. As to quaternary structure, homodimer.

It localises to the cytoplasm. It carries out the reaction D-glyceraldehyde 3-phosphate = dihydroxyacetone phosphate. It participates in carbohydrate biosynthesis; gluconeogenesis. Its pathway is carbohydrate degradation; glycolysis; D-glyceraldehyde 3-phosphate from glycerone phosphate: step 1/1. Its function is as follows. Involved in the gluconeogenesis. Catalyzes stereospecifically the conversion of dihydroxyacetone phosphate (DHAP) to D-glyceraldehyde-3-phosphate (G3P). This chain is Triosephosphate isomerase, found in Streptococcus pneumoniae serotype 2 (strain D39 / NCTC 7466).